A 127-amino-acid chain; its full sequence is MSIPNNLRYSEEHEWVKTEGNEVVIGITHFAQNELGDIVFVELPEVGATIEADEPFGSVESVKTVSELYAPVSGKVVAVNEELSDQPELVNESPYEGAWMVKVELSDASQVEKLLTAEKYAEMTNQD.

Residues 22–104 (EVVIGITHFA…YEGAWMVKVE (83 aa)) form the Lipoyl-binding domain. An N6-lipoyllysine modification is found at lysine 63.

This sequence belongs to the GcvH family. As to quaternary structure, the glycine cleavage system is composed of four proteins: P, T, L and H. It depends on (R)-lipoate as a cofactor.

Its function is as follows. The glycine cleavage system catalyzes the degradation of glycine. The H protein shuttles the methylamine group of glycine from the P protein to the T protein. In terms of biological role, is also involved in protein lipoylation via its role as an octanoyl/lipoyl carrier protein intermediate. This Bacillus cereus (strain ZK / E33L) protein is Glycine cleavage system H protein.